Here is a 186-residue protein sequence, read N- to C-terminus: Peptidyl-tRNA hydrolase (186 aa).

Position 13 (tyrosine 13) interacts with tRNA. The Proton acceptor role is filled by histidine 18. TRNA-binding residues include tyrosine 59, asparagine 61, and asparagine 107.

It belongs to the PTH family. In terms of assembly, monomer.

The protein resides in the cytoplasm. It carries out the reaction an N-acyl-L-alpha-aminoacyl-tRNA + H2O = an N-acyl-L-amino acid + a tRNA + H(+). Its function is as follows. Hydrolyzes ribosome-free peptidyl-tRNAs (with 1 or more amino acids incorporated), which drop off the ribosome during protein synthesis, or as a result of ribosome stalling. In terms of biological role, catalyzes the release of premature peptidyl moieties from peptidyl-tRNA molecules trapped in stalled 50S ribosomal subunits, and thus maintains levels of free tRNAs and 50S ribosomes. The sequence is that of Peptidyl-tRNA hydrolase from Thermotoga petrophila (strain ATCC BAA-488 / DSM 13995 / JCM 10881 / RKU-1).